The chain runs to 231 residues: L-ribulose-5-phosphate 4-epimerase SgbE (231 aa).

Substrate-binding positions include 27–28 (GN), 44–45 (SG), and 74–75 (SS). Residues aspartate 76, histidine 95, and histidine 97 each contribute to the Zn(2+) site. The active-site Proton donor/acceptor is aspartate 120. Position 171 (histidine 171) interacts with Zn(2+). Tyrosine 229 (proton donor/acceptor) is an active-site residue.

This sequence belongs to the aldolase class II family. AraD/FucA subfamily. It depends on Zn(2+) as a cofactor.

It carries out the reaction L-ribulose 5-phosphate = D-xylulose 5-phosphate. Functionally, catalyzes the interconversion of L-ribulose 5-phosphate (LRu5P) and D-xylulose 5-phosphate (D-Xu5P) via a retroaldol/aldol mechanism (carbon-carbon bond cleavage analogous to a class II aldolase reaction). May be involved in the utilization of 2,3-diketo-L-gulonate. This Haemophilus influenzae (strain ATCC 51907 / DSM 11121 / KW20 / Rd) protein is L-ribulose-5-phosphate 4-epimerase SgbE.